Consider the following 144-residue polypeptide: MTENMIVIYHNPDCGTSRNVLQLIEAAGYLPQVIEYVKEGWTKPQLLGLFAAADLTPRSALRTTKSPAAELNLLEETVTDAQILDAMVEYPILVNRPIVCTPKGVRLCRPSEVVLDLLDHWPSGPFAKEDGELIIDERGNRVYT.

Cys14 functions as the Nucleophile; cysteine thioarsenate intermediate in the catalytic mechanism.

It belongs to the ArsC family.

The catalysed reaction is [glutaredoxin]-dithiol + arsenate + glutathione + H(+) = glutathionyl-S-S-[glutaredoxin] + arsenite + H2O. In terms of biological role, catalyzes the reduction of arsenate [As(V)] to arsenite [As(III)]. Does not constitute the major arsenate reductase in cells: essential only in the absence of ArsC (AC P74313). The chain is Arsenate reductase ArsI1 from Synechocystis sp. (strain ATCC 27184 / PCC 6803 / Kazusa).